The primary structure comprises 463 residues: Cysteine--tRNA ligase (463 aa).

Cysteine 28 contacts Zn(2+). The short motif at 30–40 (ITPYDLCHIGH) is the 'HIGH' region element. Residues cysteine 211, histidine 236, and glutamate 240 each coordinate Zn(2+). Positions 268–272 (KMSKS) match the 'KMSKS' region motif. An ATP-binding site is contributed by lysine 271.

The protein belongs to the class-I aminoacyl-tRNA synthetase family. Monomer. Zn(2+) serves as cofactor.

It localises to the cytoplasm. It carries out the reaction tRNA(Cys) + L-cysteine + ATP = L-cysteinyl-tRNA(Cys) + AMP + diphosphate. The protein is Cysteine--tRNA ligase of Wigglesworthia glossinidia brevipalpis.